A 40-amino-acid polypeptide reads, in one-letter code: Photosystem II reaction center protein J (40 aa).

Residues 8–28 (IPLWLIGTVTGILVIGLLGIF) form a helical membrane-spanning segment.

Belongs to the PsbJ family. As to quaternary structure, PSII is composed of 1 copy each of membrane proteins PsbA, PsbB, PsbC, PsbD, PsbE, PsbF, PsbH, PsbI, PsbJ, PsbK, PsbL, PsbM, PsbT, PsbX, PsbY, PsbZ, Psb30/Ycf12, at least 3 peripheral proteins of the oxygen-evolving complex and a large number of cofactors. It forms dimeric complexes.

Its subcellular location is the plastid. The protein localises to the chloroplast thylakoid membrane. One of the components of the core complex of photosystem II (PSII). PSII is a light-driven water:plastoquinone oxidoreductase that uses light energy to abstract electrons from H(2)O, generating O(2) and a proton gradient subsequently used for ATP formation. It consists of a core antenna complex that captures photons, and an electron transfer chain that converts photonic excitation into a charge separation. This Angiopteris evecta (Mule's foot fern) protein is Photosystem II reaction center protein J.